The following is a 492-amino-acid chain: Spore germination protein XA (492 aa).

7 helical membrane-spanning segments follow: residues 246-266, 285-305, 325-345, 353-373, 377-397, 413-433, and 442-462; these read FILL…FPFF, LLSL…VALV, EGIP…FELL, PAAF…QAAI, FVSP…FTLV, FLMS…LIVI, and GLPF…PSTF.

This sequence belongs to the GerABKA family.

It is found in the cell membrane. May allow B.anthracis to germinate within phagocytic cells and therefore involved in virulence. This chain is Spore germination protein XA (gerXA), found in Bacillus anthracis.